Reading from the N-terminus, the 344-residue chain is Sulfate/thiosulfate import ATP-binding protein CysA (344 aa).

The region spanning 9 to 239 is the ABC transporter domain; it reads IQVSQVSKQF…PATPFVMSFI (231 aa). 41 to 48 is a binding site for ATP; sequence GPSGSGKS.

This sequence belongs to the ABC transporter superfamily. Sulfate/tungstate importer (TC 3.A.1.6) family. The complex is composed of two ATP-binding proteins (CysA), two transmembrane proteins (CysT and CysW) and a solute-binding protein (CysP).

The protein localises to the cell inner membrane. The enzyme catalyses sulfate(out) + ATP + H2O = sulfate(in) + ADP + phosphate + H(+). It carries out the reaction thiosulfate(out) + ATP + H2O = thiosulfate(in) + ADP + phosphate + H(+). Functionally, part of the ABC transporter complex CysAWTP involved in sulfate/thiosulfate import. Responsible for energy coupling to the transport system. The protein is Sulfate/thiosulfate import ATP-binding protein CysA of Synechococcus elongatus (strain ATCC 33912 / PCC 7942 / FACHB-805) (Anacystis nidulans R2).